Reading from the N-terminus, the 392-residue chain is Transcription factor GATA-4 (392 aa).

The segment at 75 to 113 (SSAYNPGTSHPPVSPRFTFSSSPPITAPSSREVSYSSPL) is disordered. A compositionally biased stretch (polar residues) spans 91–113 (FTFSSSPPITAPSSREVSYSSPL). 2 consecutive GATA-type zinc fingers follow at residues 184-208 (CVNC…CNAC) and 238-262 (CANC…CNAC). Disordered stretches follow at residues 279 to 339 (KEGI…HSNS) and 359 to 392 (MPSL…LVLA). The span at 284–293 (TRKRKPKNLS) shows a compositional bias: basic residues. Positions 302-316 (SGSDSLTPSTSSTNS) are enriched in low complexity. Polar residues predominate over residues 364-380 (LSPQNHHSTFNPSPQAN).

As to expression, expressed at high levels in heart, small intestine, stomach, ovary, and liver. Found at much lower levels in lung, spleen, pancreas and skin.

Its subcellular location is the nucleus. Its function is as follows. Transcriptional activator that binds to the consensus sequence 5'-AGATAG-3'. Associated with cardiac specification and can regulate cardiac-specific transcription during embryogenesis. Activates the expression of cardiac MHC-alpha in vivo. This is Transcription factor GATA-4 (gata4) from Xenopus laevis (African clawed frog).